The sequence spans 351 residues: Cell cycle control protein 50B (351 aa).

Over 1–33 (MTWSATARGAHQPDNTAFTQQRLPAWQPLLSAS) the chain is Cytoplasmic. The chain crosses the membrane as a helical span at residues 34 to 54 (IALPLFFCAGLAFIGLGLGLY). The Exoplasmic loop portion of the chain corresponds to 55–315 (YSSNGIKELE…SISWMGGKNP (261 aa)). Asparagine 75, asparagine 213, and asparagine 286 each carry an N-linked (GlcNAc...) asparagine glycan. Residues 316-336 (FLGIAYLVVGSLCILTGFVML) form a helical membrane-spanning segment. At 337-351 (VVYIRYQDQDDDDEE) the chain is on the cytoplasmic side.

This sequence belongs to the CDC50/LEM3 family. In terms of assembly, component of a P4-ATPase flippase complex which consists of a catalytic alpha subunit and an accessory beta subunit. Interacts with alpha subunits ATP8A1, ATP8B1, ATP8B2 and ATP8B4.

The protein resides in the cell membrane. In terms of biological role, accessory component of a P4-ATPase flippase complex which catalyzes the hydrolysis of ATP coupled to the transport of aminophospholipids from the outer to the inner leaflet of various membranes and ensures the maintenance of asymmetric distribution of phospholipids. Phospholipid translocation also seems to be implicated in vesicle formation and in uptake of lipid signaling molecules. The beta subunit may assist in binding of the phospholipid substrate. Can mediate the export of alpha subunits ATP8A1, ATP8B1, ATP8B2 and ATP8B4 from the ER to the plasma membrane. In Homo sapiens (Human), this protein is Cell cycle control protein 50B (TMEM30B).